A 145-amino-acid polypeptide reads, in one-letter code: Transcriptional regulator MraZ (145 aa).

SpoVT-AbrB domains follow at residues 5-50 (TFNH…ALPQ) and 81-124 (AHEV…DKAA).

Belongs to the MraZ family. In terms of assembly, forms oligomers.

The protein localises to the cytoplasm. It localises to the nucleoid. This Anaeromyxobacter sp. (strain Fw109-5) protein is Transcriptional regulator MraZ.